The following is a 343-amino-acid chain: S-adenosylmethionine:tRNA ribosyltransferase-isomerase (343 aa).

Belongs to the QueA family. As to quaternary structure, monomer.

The protein localises to the cytoplasm. The catalysed reaction is 7-aminomethyl-7-carbaguanosine(34) in tRNA + S-adenosyl-L-methionine = epoxyqueuosine(34) in tRNA + adenine + L-methionine + 2 H(+). It participates in tRNA modification; tRNA-queuosine biosynthesis. In terms of biological role, transfers and isomerizes the ribose moiety from AdoMet to the 7-aminomethyl group of 7-deazaguanine (preQ1-tRNA) to give epoxyqueuosine (oQ-tRNA). The protein is S-adenosylmethionine:tRNA ribosyltransferase-isomerase of Stenotrophomonas maltophilia (strain R551-3).